The primary structure comprises 220 residues: Lipoprotein-releasing system ATP-binding protein LolD (220 aa).

The region spanning 1–220 is the ABC transporter domain; that stretch reads MRAVDIHKSY…YRMKDGQWQS (220 aa). 37–44 is an ATP binding site; sequence GASGAGKS.

Belongs to the ABC transporter superfamily. Lipoprotein translocase (TC 3.A.1.125) family. As to quaternary structure, the complex is composed of two ATP-binding proteins (LolD) and two transmembrane proteins (LolC and LolE).

The protein localises to the cell inner membrane. Functionally, part of the ABC transporter complex LolCDE involved in the translocation of mature outer membrane-directed lipoproteins, from the inner membrane to the periplasmic chaperone, LolA. Responsible for the formation of the LolA-lipoprotein complex in an ATP-dependent manner. The sequence is that of Lipoprotein-releasing system ATP-binding protein LolD from Bdellovibrio bacteriovorus (strain ATCC 15356 / DSM 50701 / NCIMB 9529 / HD100).